Reading from the N-terminus, the 434-residue chain is ATP-sensitive inward rectifier potassium channel 14 (434 aa).

Over methionine 1–aspartate 81 the chain is Cytoplasmic. Cysteine 79 carries the post-translational modification S-nitrosocysteine. A helical transmembrane segment spans residues valine 82 to leucine 108. At isoleucine 109 to serine 131 the chain is on the extracellular side. Residues phenylalanine 132 to tyrosine 148 constitute an intramembrane region (helical; Pore-forming). The short motif at serine 145–valine 150 is the Selectivity filter element. Residues glycine 149 to cysteine 157 are Extracellular-facing. The helical transmembrane segment at proline 158–lysine 185 threads the bilayer. The Cytoplasmic portion of the chain corresponds to methionine 186 to proline 434. Residues glutamine 398–proline 434 are disordered. Over residues lysine 407 to glutamate 416 the composition is skewed to basic and acidic residues. Residues alanine 418–proline 434 show a composition bias toward low complexity.

It belongs to the inward rectifier-type potassium channel (TC 1.A.2.1) family. KCNJ14 subfamily.

It is found in the membrane. It carries out the reaction K(+)(in) = K(+)(out). Its activity is regulated as follows. Channel activity is regulated by variations of cytosolic pH; channels are activated by alkaline and inhibited by acidic pH values. Inhibited by Ba(2+) and Cs(+) in a voltage-dependent manner; sensitivity to those inhibitors is lower than in other Kir channels. Its function is as follows. Inward rectifier potassium channels are characterized by a greater tendency to allow potassium to flow into the cell rather than out of it. Their voltage dependence is regulated by the concentration of extracellular potassium; as external potassium is raised, the voltage range of the channel opening shifts to more positive voltages. The chain is ATP-sensitive inward rectifier potassium channel 14 (Kcnj14) from Mus musculus (Mouse).